Reading from the N-terminus, the 664-residue chain is uncharacterized protein (664 aa).

This is an uncharacterized protein from Mycoplasma pneumoniae (strain ATCC 29342 / M129 / Subtype 1) (Mycoplasmoides pneumoniae).